Here is a 622-residue protein sequence, read N- to C-terminus: Probable E3 ubiquitin-protein ligase DTX2 (622 aa).

2 consecutive WWE domains span residues 8 to 97 and 98 to 174; these read SLVQ…AVRR and HLFP…SVRR. Residues Arg-213, Arg-215, and Arg-233 each carry the asymmetric dimethylarginine modification. At Lys-249 the chain carries N6-acetyllysine. Disordered stretches follow at residues 249–324 and 355–393; these read KPSL…VPMQ and APQPTSPPASRLASKSHGSVKRLRKMSVKGATPKPEPEP. The residue at position 256 (Arg-256) is an Omega-N-methylarginine. The segment covering 274-285 has biased composition (polar residues); it reads LGSQPLYRSSLS. A compositionally biased stretch (low complexity) spans 299 to 322; it reads SGAVSASLPSGPSSSPGSVPATVP. Position 360 is a phosphoserine (Ser-360). A compositionally biased stretch (basic residues) spans 372–381; the sequence is GSVKRLRKMS. The RING-type zinc finger occupies 412-473; sequence CIICMEKLST…DGSLQCPSCK (62 aa).

The protein belongs to the Deltex family. In terms of assembly, homodimer. May form a heterodimer with other members of the Deltex family. Interacts with NOTCH1.

It is found in the cytoplasm. Its subcellular location is the nucleus. It catalyses the reaction S-ubiquitinyl-[E2 ubiquitin-conjugating enzyme]-L-cysteine + [acceptor protein]-L-lysine = [E2 ubiquitin-conjugating enzyme]-L-cysteine + N(6)-ubiquitinyl-[acceptor protein]-L-lysine.. Its pathway is protein modification; protein ubiquitination. Functionally, regulator of Notch signaling, a signaling pathway involved in cell-cell communications that regulates a broad spectrum of cell-fate determinations. Probably acts both as a positive and negative regulator of Notch, depending on the developmental and cell context. Mediates the antineural activity of Notch, possibly by inhibiting the transcriptional activation mediated by MATCH1. Functions as a ubiquitin ligase protein in vitro, suggesting that it may regulate the Notch pathway via some ubiquitin ligase activity. The chain is Probable E3 ubiquitin-protein ligase DTX2 (DTX2) from Homo sapiens (Human).